The primary structure comprises 442 residues: G-protein coupled receptor family C group 5 member C (442 aa).

The N-terminal stretch at 1–23 is a signal peptide; the sequence is MAIHRTVLMCLGLPLFLLPGARA. The Extracellular portion of the chain corresponds to 24-50; sequence QEQAPPGCSPDLNPLYYNLCDRSEAWG. The chain crosses the membrane as a helical span at residues 51–71; the sequence is IILEAVAGAGVVTTFVLTIIL. Residues 72 to 85 are Cytoplasmic-facing; sequence VASLPFVQDTKKRS. The chain crosses the membrane as a helical span at residues 86–106; it reads LLGTQVFFLLGTLGLFCLVFA. Over 107–120 the chain is Extracellular; it reads CVVKPSFSTCASRR. A helical membrane pass occupies residues 121–141; it reads FLFGVLFAICFSCLVAHVLAL. Over 142 to 155 the chain is Cytoplasmic; the sequence is HFLVRKNHGPRGWV. A helical transmembrane segment spans residues 156-176; sequence IFLVALLLSLVEVIINTEWLI. Residues 177 to 209 lie on the Extracellular side of the membrane; it reads ITLVRGAGTEGDALGNGSAGWVAVSPCAIANAD. Asn192 carries an N-linked (GlcNAc...) asparagine glycan. A helical transmembrane segment spans residues 210-230; that stretch reads FVMALIYVMLLLLCAFSGAWS. The Cytoplasmic segment spans residues 231–242; the sequence is ALCGRFKRWRKH. A helical membrane pass occupies residues 243 to 263; that stretch reads GVFILLTTTASIAVWVVWIVM. Topologically, residues 264 to 280 are extracellular; it reads YTYGNRQHNSPTWDDPT. A helical transmembrane segment spans residues 281–301; sequence LAIALATNAWAFVLFYVIPEV. At 302–442 the chain is on the cytoplasmic side; that stretch reads SQVTRSSPEQ…QVFRNPYVWD (141 aa). Residues Ser345, Ser384, Ser404, and Ser407 each carry the phosphoserine modification. Tyr415 is modified (phosphotyrosine). Thr424 carries the phosphothreonine modification.

This sequence belongs to the G-protein coupled receptor 3 family.

The protein resides in the cell membrane. Functionally, this retinoic acid-inducible G-protein coupled receptor provide evidence for a possible interaction between retinoid and G-protein signaling pathways. The protein is G-protein coupled receptor family C group 5 member C (GPRC5C) of Bos taurus (Bovine).